The sequence spans 465 residues: Gamma-aminobutyric acid receptor subunit alpha-6 (465 aa).

The signal sequence occupies residues 1–19 (MALLIAWVCVAVSIEKALG). Residues 20–243 (GQGDGGDLYS…FHLQRKMGYF (224 aa)) are Extracellular-facing. Residue N31 is glycosylated (N-linked (GlcNAc...) asparagine). R84 is a 4-aminobutanoate binding site. Residues N128 and N141 are each glycosylated (N-linked (GlcNAc...) asparagine). Position 147 (T147) interacts with 4-aminobutanoate. A disulfide bridge connects residues C156 and C170. The helical transmembrane segment at 244-264 (MIQIYTPCIMTVILSQVSFWI) threads the bilayer. The Cytoplasmic portion of the chain corresponds to 265–270 (NKESVP). A helical membrane pass occupies residues 271 to 290 (ARTVFGITTVLTMTTLSISA). Residues 291–304 (RHSLPKVSYATAMD) lie on the Extracellular side of the membrane. A helical membrane pass occupies residues 305–325 (WFIAVCFAFVFSALIEFAAVN). Residues 326–424 (YFTNLQTQRA…GTSKIDQYSR (99 aa)) are Cytoplasmic-facing. A disordered region spans residues 392-415 (NSASQCQPVSAPPPAPPAPPPVGG). The segment covering 401–413 (SAPPPAPPAPPPV) has biased composition (pro residues). Residues 425-445 (ILFPVAFAGFNLVYWVVYLSK) traverse the membrane as a helical segment. Residues 446–465 (DTMEFFEPTAMHLRNDHQSN) lie on the Extracellular side of the membrane.

Belongs to the ligand-gated ion channel (TC 1.A.9) family. Gamma-aminobutyric acid receptor (TC 1.A.9.5) subfamily. GABRA6 sub-subfamily. As to quaternary structure, heteropentamer, formed by a combination of alpha (GABRA1-6), beta (GABRB1-3), gamma (GABRG1-3), delta (GABRD), epsilon (GABRE), rho (GABRR1-3), pi (GABRP) and theta (GABRQ) chains, each subunit exhibiting distinct physiological and pharmacological properties. In terms of tissue distribution, expressed in brain, in cerebellar granule cells.

It localises to the postsynaptic cell membrane. It is found in the cell membrane. The catalysed reaction is chloride(in) = chloride(out). Alpha subunit of the heteropentameric ligand-gated chloride channel gated by gamma-aminobutyric acid (GABA), a major inhibitory neurotransmitter in the brain. GABA-gated chloride channels, also named GABA(A) receptors (GABAAR), consist of five subunits arranged around a central pore and contain GABA active binding site(s) located at the alpha and beta subunit interface(s). When activated by GABA, GABAARs selectively allow the flow of chloride anions across the cell membrane down their electrochemical gradient. The chain is Gamma-aminobutyric acid receptor subunit alpha-6 (GABRA6) from Gallus gallus (Chicken).